The sequence spans 1243 residues: Tau-tubulin kinase 2 (1243 aa).

Residues tryptophan 21–isoleucine 284 form the Protein kinase domain. ATP contacts are provided by residues isoleucine 27–isoleucine 35 and lysine 50. The active-site Proton acceptor is aspartate 141. Serine 445 is subject to Phosphoserine. Polar residues predominate over residues valine 674–serine 683. Disordered stretches follow at residues valine 674–leucine 695 and threonine 737–aspartate 761. Serine 786 is subject to Phosphoserine. The interval glutamine 1063–glycine 1086 is disordered. A compositionally biased stretch (pro residues) spans leucine 1073–arginine 1084. At serine 1102 the chain carries Phosphoserine. A compositionally biased stretch (polar residues) spans glutamine 1115–serine 1129. Residues glutamine 1115–arginine 1243 are disordered. Composition is skewed to low complexity over residues valine 1144 to alanine 1170, serine 1187 to serine 1202, and serine 1227 to arginine 1243.

Belongs to the protein kinase superfamily. CK1 Ser/Thr protein kinase family. As to quaternary structure, interacts with CEP164. Interacts with MCRS1; the interaction is required for recruitment of TTBK2 to the mother centriole.

The protein resides in the cell projection. It is found in the cilium. Its subcellular location is the cytoplasm. It localises to the cytoskeleton. The protein localises to the cilium basal body. The protein resides in the microtubule organizing center. It is found in the centrosome. Its subcellular location is the centriole. It localises to the cytosol. The protein localises to the nucleus. It catalyses the reaction L-seryl-[protein] + ATP = O-phospho-L-seryl-[protein] + ADP + H(+). It carries out the reaction L-threonyl-[protein] + ATP = O-phospho-L-threonyl-[protein] + ADP + H(+). Its function is as follows. Serine/threonine kinase that acts as a key regulator of ciliogenesis: controls the initiation of ciliogenesis by binding to the distal end of the basal body and promoting the removal of CCP110, which caps the mother centriole, leading to the recruitment of IFT proteins, which build the ciliary axoneme. Has some substrate preference for proteins that are already phosphorylated on a Tyr residue at the +2 position relative to the phosphorylation site. Able to phosphorylate tau on serines in vitro. Phosphorylates MPHOSPH9 which promotes its ubiquitination and proteasomal degradation, loss of MPHOSPH9 facilitates the removal of the CP110-CEP97 complex (a negative regulator of ciliogenesis) from the mother centrioles, promoting the initiation of ciliogenesis. Required for recruitment of CPLANE2 and INTU to the mother centriole. The polypeptide is Tau-tubulin kinase 2 (Ttbk2) (Mus musculus (Mouse)).